We begin with the raw amino-acid sequence, 341 residues long: Ribosomal RNA small subunit methyltransferase C (341 aa).

Belongs to the methyltransferase superfamily. RsmC family. In terms of assembly, monomer.

It is found in the cytoplasm. The catalysed reaction is guanosine(1207) in 16S rRNA + S-adenosyl-L-methionine = N(2)-methylguanosine(1207) in 16S rRNA + S-adenosyl-L-homocysteine + H(+). Specifically methylates the guanine in position 1207 of 16S rRNA in the 30S particle. In Shewanella pealeana (strain ATCC 700345 / ANG-SQ1), this protein is Ribosomal RNA small subunit methyltransferase C.